We begin with the raw amino-acid sequence, 266 residues long: Acetyl esterase (266 aa).

This is Acetyl esterase (xynC) from Caldicellulosiruptor saccharolyticus (Caldocellum saccharolyticum).